The sequence spans 2102 residues: Probable serine/threonine-protein kinase DDB_G0272282 (2102 aa).

Residues 1–118 (MKYQLSILGD…NWLVPQNEPA (118 aa)) enclose the PX domain. A PH domain is found at 124–222 (NPDKSGYLIK…WIKAIELSQQ (99 aa)). A compositionally biased stretch (basic and acidic residues) spans 225–240 (QDQEQYRKQEEEERQK). 9 disordered regions span residues 225-289 (QDQE…SDGS), 302-390 (GPNN…SDLN), 426-558 (EQPG…SASP), 574-665 (SNLP…PLPN), 685-768 (NNNS…NNSL), 804-842 (KKKE…GTLR), 1029-1051 (QQQQ…SSVN), 1106-1224 (GTPT…PQPQ), and 1476-1514 (SSKV…SSLT). Composition is skewed to low complexity over residues 256 to 281 (STLT…LPSS) and 304 to 327 (NNSN…NNHN). Residues 328–348 (HYNHHNNNHNNSHHHHHHHNG) are compositionally biased toward basic residues. 2 stretches are compositionally biased toward low complexity: residues 353-376 (SSQV…STSL) and 426-437 (EQPGSYQQPQHQ). The segment covering 438 to 450 (QGGGGGGGGGGGN) has biased composition (gly residues). The segment covering 466–484 (SNLSSRSNSNSSGSSSGSG) has biased composition (low complexity). Residues 485–501 (SSSGSGPIGSGGVGGGL) show a composition bias toward gly residues. Low complexity-rich tracts occupy residues 535 to 558 (SNSS…SASP) and 587 to 626 (NANN…NNGN). A compositionally biased stretch (polar residues) spans 627 to 659 (TASGSSCNTTPNLLPAPTNVSPIQNRARSSPMT). A compositionally biased stretch (basic and acidic residues) spans 804–824 (KKKEKDKEKEKDKEKEKEKEI). A compositionally biased stretch (polar residues) spans 827–841 (NISTSTTPNKKNGTL). Polar residues predominate over residues 1106–1118 (GTPTTTSGDNTPL). 3 stretches are compositionally biased toward low complexity: residues 1119–1182 (TNTA…NSSI), 1196–1221 (EQQQ…QQQP), and 1476–1492 (SSKV…SPIL). The span at 1493 to 1507 (SSPPPPMKQPPPQVI) shows a compositional bias: pro residues. A Protein kinase domain is found at 1527 to 1851 (FEIIKPISRG…AYEVKTHPFF (325 aa)). ATP is bound by residues 1533-1541 (ISRGAFGRV) and Lys-1556. The active-site Proton acceptor is Asp-1650. Low complexity-rich tracts occupy residues 1687-1729 (NTNT…SQTN), 1902-1999 (SQPQ…NINN), and 2006-2052 (NNNS…QINN). Disordered stretches follow at residues 1687–1741 (NTNT…KNTL) and 1902–2070 (SQPQ…SKIE). One can recognise an AGC-kinase C-terminal domain in the interval 1852 to 1911 (ANVNWDTLIDQEMDNIFLPKPENNYDTDYFWDRQSMYDDEAEDDFLTINQSQPQHQSQHQ).

It belongs to the protein kinase superfamily. AGC Ser/Thr protein kinase family.

The catalysed reaction is L-seryl-[protein] + ATP = O-phospho-L-seryl-[protein] + ADP + H(+). It carries out the reaction L-threonyl-[protein] + ATP = O-phospho-L-threonyl-[protein] + ADP + H(+). The sequence is that of Probable serine/threonine-protein kinase DDB_G0272282 from Dictyostelium discoideum (Social amoeba).